Consider the following 152-residue polypeptide: Male-specific protein scotti (152 aa).

It belongs to the male-specific scotti family.

Post-meiotically transcribed gene that has a role in late spermiogenesis; required for actin cone progression during spermatid individualization. The chain is Male-specific protein scotti from Drosophila mojavensis (Fruit fly).